Reading from the N-terminus, the 278-residue chain is Elongation factor Ts 2, mitochondrial (278 aa).

The protein belongs to the EF-Ts family.

The protein resides in the mitochondrion. Associates with the EF-Tu.GDP complex and induces the exchange of GDP to GTP. It remains bound to the aminoacyl-tRNA.EF-Tu.GTP complex up to the GTP hydrolysis stage on the ribosome. The protein is Elongation factor Ts 2, mitochondrial of Trypanosoma cruzi (strain CL Brener).